Consider the following 715-residue polypeptide: Serine/arginine repetitive matrix protein 5 (715 aa).

Over residues 1-13 (MSSPKRSSKPSMS) the composition is skewed to low complexity. Positions 1 to 715 (MSSPKRSSKP…RSSSSSSKLA (715 aa)) are disordered. Polar residues predominate over residues 32-59 (LKSTKSATPNRSLVPTKPATSRNSVMSP). Over residues 60–79 (SSSKSTKSTSTKRAPSNRPS) the composition is skewed to low complexity. Basic residues predominate over residues 80 to 90 (SRSRVRSKART). Positions 92-104 (SRVSTDTRTSKAS) are enriched in polar residues. A compositionally biased stretch (basic residues) spans 112–136 (HQRRGTHSRGRTPGRRGSRSSKRSP). Composition is skewed to polar residues over residues 213-224 (TPSTAKCQTPTG) and 257-272 (YSPT…YNQA). Over residues 273 to 285 (STRSRPQSHSQSR) the composition is skewed to low complexity. The span at 286–320 (SPRRSRSGSQKRTHSRVRSHSWKRNHSRARSRTRK) shows a compositional bias: basic residues. 2 stretches are compositionally biased toward basic and acidic residues: residues 359–388 (PSKE…KESG) and 397–521 (KQRD…ERDH). Residues 522 to 536 (RRSRSPSKERQRRQS) show a composition bias toward basic residues. 2 stretches are compositionally biased toward basic and acidic residues: residues 539–595 (PNKE…DHSR) and 611–628 (SSKE…KEGN). The segment covering 657–666 (TRTSSLSQNR) has biased composition (polar residues). Residues 667–681 (TPSKTSSHSPSTFPS) show a composition bias toward low complexity. The span at 682–715 (GGQTLSQDDSQADATTSKATLPGERSSSSSSKLA) shows a compositional bias: polar residues.

The sequence is that of Serine/arginine repetitive matrix protein 5 (SRRM5) from Homo sapiens (Human).